Reading from the N-terminus, the 441-residue chain is uncharacterized protein (441 aa).

This is an uncharacterized protein from Methanocaldococcus jannaschii (strain ATCC 43067 / DSM 2661 / JAL-1 / JCM 10045 / NBRC 100440) (Methanococcus jannaschii).